The sequence spans 564 residues: Urocanate hydratase (564 aa).

Residues 58–59 (GG), glutamine 136, 182–184 (GMG), glutamate 202, arginine 207, 245–246 (NA), 266–270 (QTSAH), 276–277 (YL), and tyrosine 325 each bind NAD(+). Residue cysteine 413 is part of the active site. Glycine 495 lines the NAD(+) pocket.

It belongs to the urocanase family. NAD(+) serves as cofactor.

The protein resides in the cytoplasm. The catalysed reaction is 4-imidazolone-5-propanoate = trans-urocanate + H2O. It participates in amino-acid degradation; L-histidine degradation into L-glutamate; N-formimidoyl-L-glutamate from L-histidine: step 2/3. In terms of biological role, catalyzes the conversion of urocanate to 4-imidazolone-5-propionate. The protein is Urocanate hydratase of Vibrio atlanticus (strain LGP32) (Vibrio splendidus (strain Mel32)).